The sequence spans 572 residues: 2-isopropylmalate synthase (572 aa).

Positions 31–305 (PIWMSTDLRD…DPGLDFSNIN (275 aa)) constitute a Pyruvate carboxyltransferase domain. Residues Asp40, His244, His246, and Asn280 each contribute to the Mg(2+) site. The tract at residues 437–572 (NATPVHYVGH…MNDATESVGV (136 aa)) is regulatory domain.

Belongs to the alpha-IPM synthase/homocitrate synthase family. LeuA type 2 subfamily. In terms of assembly, homodimer. The cofactor is Mg(2+).

The protein localises to the cytoplasm. It catalyses the reaction 3-methyl-2-oxobutanoate + acetyl-CoA + H2O = (2S)-2-isopropylmalate + CoA + H(+). It participates in amino-acid biosynthesis; L-leucine biosynthesis; L-leucine from 3-methyl-2-oxobutanoate: step 1/4. Its function is as follows. Catalyzes the condensation of the acetyl group of acetyl-CoA with 3-methyl-2-oxobutanoate (2-ketoisovalerate) to form 3-carboxy-3-hydroxy-4-methylpentanoate (2-isopropylmalate). This chain is 2-isopropylmalate synthase, found in Paraburkholderia xenovorans (strain LB400).